Here is a 1082-residue protein sequence, read N- to C-terminus: Error-prone DNA polymerase (1082 aa).

This sequence belongs to the DNA polymerase type-C family. DnaE2 subfamily.

It localises to the cytoplasm. It catalyses the reaction DNA(n) + a 2'-deoxyribonucleoside 5'-triphosphate = DNA(n+1) + diphosphate. In terms of biological role, DNA polymerase involved in damage-induced mutagenesis and translesion synthesis (TLS). It is not the major replicative DNA polymerase. This chain is Error-prone DNA polymerase, found in Xanthomonas campestris pv. campestris (strain B100).